The sequence spans 299 residues: Trans-aconitate 3-methyltransferase (299 aa).

Ser-2 carries the N-acetylserine modification.

The protein belongs to the methyltransferase superfamily. Tam family.

Its subcellular location is the cytoplasm. The catalysed reaction is trans-aconitate + S-adenosyl-L-methionine = (E)-2-(methoxycarbonylmethyl)but-2-enedioate + S-adenosyl-L-homocysteine. Its function is as follows. Catalyzes the S-adenosylmethionine monomethyl esterification of trans-aconitate and 3-isopropylmalate at high affinity and of other molecules like cis-aconitate, isocitrate, and citrate at lower velocities and affinities. The function of trans-aconitate methylation appears to be in reducing the toxicity of this spontaneous breakdown product of cis-aconitate. The role of 3-isopropylmalate methylation is unclear but may represent a metabolic branch at 3-isopropylmalate, where some of the material is taken in the pathway leading to leucine and some is taken in a pathway to the 3-isopropylmalate methyl ester, a molecule that provides a signal to switch from vegetative to invasive growth in response to amino acid starvation. This Saccharomyces cerevisiae (strain YJM789) (Baker's yeast) protein is Trans-aconitate 3-methyltransferase (TMT1).